A 498-amino-acid chain; its full sequence is Ribose import ATP-binding protein RbsA (498 aa).

ABC transporter domains lie at 2–237 (LALQ…VGRD) and 247–491 (VTPG…TGQQ). 34–41 (GENGAGKS) serves as a coordination point for ATP.

Belongs to the ABC transporter superfamily. Ribose importer (TC 3.A.1.2.1) family. In terms of assembly, the complex is composed of an ATP-binding protein (RbsA), two transmembrane proteins (RbsC) and a solute-binding protein (RbsB).

It localises to the cell membrane. It carries out the reaction D-ribose(out) + ATP + H2O = D-ribose(in) + ADP + phosphate + H(+). Its function is as follows. Part of the ABC transporter complex RbsABC involved in ribose import. Responsible for energy coupling to the transport system. The sequence is that of Ribose import ATP-binding protein RbsA from Deinococcus geothermalis (strain DSM 11300 / CIP 105573 / AG-3a).